Reading from the N-terminus, the 218-residue chain is Probable transaldolase (218 aa).

Lys-87 serves as the catalytic Schiff-base intermediate with substrate.

Belongs to the transaldolase family. Type 3B subfamily.

The protein resides in the cytoplasm. It catalyses the reaction D-sedoheptulose 7-phosphate + D-glyceraldehyde 3-phosphate = D-erythrose 4-phosphate + beta-D-fructose 6-phosphate. It functions in the pathway carbohydrate degradation; pentose phosphate pathway; D-glyceraldehyde 3-phosphate and beta-D-fructose 6-phosphate from D-ribose 5-phosphate and D-xylulose 5-phosphate (non-oxidative stage): step 2/3. Functionally, transaldolase is important for the balance of metabolites in the pentose-phosphate pathway. The sequence is that of Probable transaldolase from Bacteroides fragilis (strain ATCC 25285 / DSM 2151 / CCUG 4856 / JCM 11019 / LMG 10263 / NCTC 9343 / Onslow / VPI 2553 / EN-2).